A 209-amino-acid chain; its full sequence is Thiamine-phosphate synthase (209 aa).

4-amino-2-methyl-5-(diphosphooxymethyl)pyrimidine-binding positions include 40 to 44 and Asn72; that span reads QLREK. 2 residues coordinate Mg(2+): Asp73 and Asp92. Ser111 is a binding site for 4-amino-2-methyl-5-(diphosphooxymethyl)pyrimidine. Position 137 to 139 (137 to 139) interacts with 2-[(2R,5Z)-2-carboxy-4-methylthiazol-5(2H)-ylidene]ethyl phosphate; it reads TNS. Residue Lys140 coordinates 4-amino-2-methyl-5-(diphosphooxymethyl)pyrimidine. 2-[(2R,5Z)-2-carboxy-4-methylthiazol-5(2H)-ylidene]ethyl phosphate-binding positions include Gly167 and 187–188; that span reads IS.

It belongs to the thiamine-phosphate synthase family. Mg(2+) is required as a cofactor.

It catalyses the reaction 2-[(2R,5Z)-2-carboxy-4-methylthiazol-5(2H)-ylidene]ethyl phosphate + 4-amino-2-methyl-5-(diphosphooxymethyl)pyrimidine + 2 H(+) = thiamine phosphate + CO2 + diphosphate. It carries out the reaction 2-(2-carboxy-4-methylthiazol-5-yl)ethyl phosphate + 4-amino-2-methyl-5-(diphosphooxymethyl)pyrimidine + 2 H(+) = thiamine phosphate + CO2 + diphosphate. The catalysed reaction is 4-methyl-5-(2-phosphooxyethyl)-thiazole + 4-amino-2-methyl-5-(diphosphooxymethyl)pyrimidine + H(+) = thiamine phosphate + diphosphate. It participates in cofactor biosynthesis; thiamine diphosphate biosynthesis; thiamine phosphate from 4-amino-2-methyl-5-diphosphomethylpyrimidine and 4-methyl-5-(2-phosphoethyl)-thiazole: step 1/1. Condenses 4-methyl-5-(beta-hydroxyethyl)thiazole monophosphate (THZ-P) and 2-methyl-4-amino-5-hydroxymethyl pyrimidine pyrophosphate (HMP-PP) to form thiamine monophosphate (TMP). In Clostridium tetani (strain Massachusetts / E88), this protein is Thiamine-phosphate synthase.